The chain runs to 1640 residues: Phospholipase D C (1640 aa).

A compositionally biased stretch (polar residues) spans Ser-122–Ser-132. Disordered stretches follow at residues Ser-122–Ser-247, His-264–Thr-283, Glu-439–Asn-499, and Asp-521–Glu-541. The segment covering Asn-133–Asn-193 has biased composition (low complexity). A compositionally biased stretch (acidic residues) spans Asp-197–Ser-231. The segment covering Thr-232–Ser-247 has biased composition (polar residues). Low complexity-rich tracts occupy residues His-264–Asn-273 and Thr-467–Asn-499. The segment covering Asp-521 to Asp-534 has biased composition (acidic residues). In terms of domain architecture, PLD phosphodiesterase 1 spans Leu-1009 to Arg-1036. Catalysis depends on residues His-1014, Lys-1016, and Asp-1021. Low complexity-rich tracts occupy residues Ile-1149–Asn-1274 and His-1282–Gln-1296. The disordered stretch occupies residues Ile-1149–Arg-1315. The span at Gln-1297–Tyr-1306 shows a compositional bias: basic residues. The PLD phosphodiesterase 2 domain maps to Glu-1460–Ser-1487. Active-site residues include His-1465, Lys-1467, and Asp-1472.

It belongs to the phospholipase D family.

It carries out the reaction a 1,2-diacyl-sn-glycero-3-phosphocholine + H2O = a 1,2-diacyl-sn-glycero-3-phosphate + choline + H(+). Its activity is regulated as follows. Inhibited by butan-1-ol. Plays a role in cell growth. Hydrolyzes membrane phospholipids, such as PtdCho (phosphatidylcholine), producing the free headgroup and PtdOH (phosphatidic acid; signaling molecule on its own). Involved in the inhibition of actin-based motility and endocytosis. Its inhibition causes complete collapse of F-actin organization. This chain is Phospholipase D C (pldC), found in Dictyostelium discoideum (Social amoeba).